The sequence spans 312 residues: Malate dehydrogenase (312 aa).

NAD(+) is bound by residues 7 to 13 and Asp34; that span reads GAAGGIG. Substrate contacts are provided by Arg81 and Arg87. NAD(+)-binding positions include Asn94 and 117–119; that span reads ITN. Asn119 and Arg153 together coordinate substrate. The active-site Proton acceptor is the His177. Met227 is a binding site for NAD(+).

Belongs to the LDH/MDH superfamily. MDH type 1 family. As to quaternary structure, homodimer.

It catalyses the reaction (S)-malate + NAD(+) = oxaloacetate + NADH + H(+). Its function is as follows. Catalyzes the reversible oxidation of malate to oxaloacetate. The sequence is that of Malate dehydrogenase from Escherichia coli O6:K15:H31 (strain 536 / UPEC).